Here is a 432-residue protein sequence, read N- to C-terminus: Glutamate-1-semialdehyde 2,1-aminomutase 2 (432 aa).

Lysine 268 bears the N6-(pyridoxal phosphate)lysine mark.

This sequence belongs to the class-III pyridoxal-phosphate-dependent aminotransferase family. HemL subfamily. As to quaternary structure, homodimer. Pyridoxal 5'-phosphate is required as a cofactor.

The protein localises to the cytoplasm. The catalysed reaction is (S)-4-amino-5-oxopentanoate = 5-aminolevulinate. The protein operates within porphyrin-containing compound metabolism; protoporphyrin-IX biosynthesis; 5-aminolevulinate from L-glutamyl-tRNA(Glu): step 2/2. In Listeria welshimeri serovar 6b (strain ATCC 35897 / DSM 20650 / CCUG 15529 / CIP 8149 / NCTC 11857 / SLCC 5334 / V8), this protein is Glutamate-1-semialdehyde 2,1-aminomutase 2.